The chain runs to 362 residues: Probable S-adenosylmethionine-dependent methyltransferase At5g37970 (362 aa).

Positions 19, 66, 71, 107, 136, and 137 each coordinate S-adenosyl-L-homocysteine. Mg(2+) contacts are provided by asparagine 175, glutamate 261, and phenylalanine 263.

This sequence belongs to the methyltransferase superfamily. Type-7 methyltransferase family. As to quaternary structure, homodimer. It depends on Mg(2+) as a cofactor.

The polypeptide is Probable S-adenosylmethionine-dependent methyltransferase At5g37970 (Arabidopsis thaliana (Mouse-ear cress)).